Consider the following 208-residue polypeptide: MNYPNGKPFNRNKTKVGRTNDHKSSKIKYGGRGMTLEKEIELSNDYYLSIGKAVIHKKPTPVQIVDVSYPKRSKAVIKEAYFRTPSTTDYNGIYNGYYIDFEAKETKNKTSFPLQNIHEHQVMHMKAVHEQKGIAFLLIRFKTLDEVYLLPYVPFEYFWKRYQQEIKKSITVEEIRKNGYHIPYQYQPRLNYLKAVNKLILDESEDRV.

The segment at Met1 to Ser25 is disordered. Thr87, Asp89, Glu102, and Gln121 together coordinate Mg(2+).

The protein belongs to the RecU family. Requires Mg(2+) as cofactor.

Its subcellular location is the cytoplasm. The enzyme catalyses Endonucleolytic cleavage at a junction such as a reciprocal single-stranded crossover between two homologous DNA duplexes (Holliday junction).. In terms of biological role, endonuclease that resolves Holliday junction intermediates in genetic recombination. Cleaves mobile four-strand junctions by introducing symmetrical nicks in paired strands. Promotes annealing of linear ssDNA with homologous dsDNA. Required for DNA repair, homologous recombination and chromosome segregation. This chain is Holliday junction resolvase RecU, found in Staphylococcus carnosus (strain TM300).